The chain runs to 875 residues: Probable ATP-dependent RNA helicase DDX10 (875 aa).

Residues 1 to 43 (MGKTANSPGSGARPDPVRSFNRWKKKHSHRQNKKKQLRKQLKK) form a disordered region. Threonine 4 is subject to Phosphothreonine. At serine 7 the chain carries Phosphoserine. Residues 21-41 (NRWKKKHSHRQNKKKQLRKQL) show a composition bias toward basic residues. A Q motif motif is present at residues 69 to 97 (TRFSDFPLSKKTLKGLQEAQYRLVTEIQK). Residues 89 to 91 (YRL), glutamine 96, and 113 to 120 (AKTGSGKT) each bind ATP. Positions 100-274 (IGLALQGKDV…RLSLKNPEYV (175 aa)) constitute a Helicase ATP-binding domain. Positions 222–225 (DEAD) match the DEAD box motif. The Helicase C-terminal domain maps to 287-448 (TLEQNYIVCE…EIKINPEKLI (162 aa)). Residue serine 539 is modified to Phosphoserine. Lysine 555 is subject to N6-acetyllysine. Residues 562-631 (GGKRLEGTEH…QFLDRDEEEE (70 aa)) form a disordered region. Positions 564 to 575 (KRLEGTEHRQDN) are enriched in basic and acidic residues. Phosphothreonine is present on threonine 577. A compositionally biased stretch (acidic residues) spans 577 to 593 (TGNEEQEEEEDDEEEME). Polar residues predominate over residues 603-613 (QAPSLPNTSEA). Lysine 649 participates in a covalent cross-link: Glycyl lysine isopeptide (Lys-Gly) (interchain with G-Cter in SUMO2). The tract at residues 703-850 (MQKSAIKDAE…HNRKKARWDT (148 aa)) is disordered. Residues 727–741 (ERLQEEDKFDKEEYR) show a composition bias toward basic and acidic residues. A compositionally biased stretch (basic residues) spans 742 to 751 (KKIKAKHREK). Residues 752 to 771 (RLKEREARREANKRQAKAKD) are compositionally biased toward basic and acidic residues. Residues 772–790 (EEEAFLDWSDDDDDDDDGF) are compositionally biased toward acidic residues. Serine 780 bears the Phosphoserine mark. Residues 812–821 (MENKISDTKK) are compositionally biased toward basic and acidic residues. Serine 831 is subject to Phosphoserine.

This sequence belongs to the DEAD box helicase family. DDX10/DBP4 subfamily. In terms of assembly, interacts with AIM2; this interaction promotes AIM2 stability. Interacts with SCNA; this interaction causes DDX10 mislocalization to the nucleoplasm and cytoplasmic inclusions. As to expression, high in testis but widely expressed.

It localises to the cytoplasm. Its subcellular location is the nucleus. The protein resides in the nucleolus. It carries out the reaction ATP + H2O = ADP + phosphate + H(+). Its function is as follows. Putative ATP-dependent RNA helicase that plays various role in innate immunity or inflammation. Plays a role in the enhancement of AIM2-induced inflammasome activation by interacting with AIM2 and stabilizing its protein level. Negatively regulates viral infection by promoting interferon beta production and interferon stimulated genes/ISGs expression. This Homo sapiens (Human) protein is Probable ATP-dependent RNA helicase DDX10 (DDX10).